Consider the following 463-residue polypeptide: Rop guanine nucleotide exchange factor 4 (463 aa).

2 disordered regions span residues 1–25 (MESS…YRRT) and 55–87 (GHEE…SDID). The segment covering 59–68 (DVSEDAEEPK) has biased composition (acidic residues). Over residues 69–78 (DDVVNDVHGD) the composition is skewed to basic and acidic residues. One can recognise a PRONE domain in the interval 84 to 463 (SDIDSAEDAE…VDRTVRNRDD (380 aa)).

As to quaternary structure, interacts with ARAC10/ROP11. In terms of tissue distribution, expressed in root vascular tissue and trichoblast cell files. Expressed in root metaxylem cell files. Expressed in guard cells of cotyledons, rosette leaves, sepals, petal, stigmas and siliques. Expressed in root metaxylem cell files.

It is found in the cytoplasm. The protein resides in the cell membrane. Guanine-nucleotide exchange factor (GEF) that acts as an activator of Rop (Rho of plants) GTPases by promoting the exchange of GDP for GTP. In association with ROPGEF1, acts as a specific regulator of ARAC10/ROP11 function in ABA-mediated stomatal closure. The polypeptide is Rop guanine nucleotide exchange factor 4 (ROPGEF4) (Arabidopsis thaliana (Mouse-ear cress)).